A 341-amino-acid chain; its full sequence is Dihydroorotate dehydrogenase (quinone) (341 aa).

FMN contacts are provided by residues 61-65 and Thr-85; that span reads AGLDK. Lys-65 provides a ligand contact to substrate. 110-114 provides a ligand contact to substrate; that stretch reads NRMGF. FMN is bound by residues Asn-138 and Asn-171. Residue Asn-171 coordinates substrate. The active-site Nucleophile is the Ser-174. Asn-176 contributes to the substrate binding site. Residues Lys-216 and Thr-244 each contribute to the FMN site. 245-246 serves as a coordination point for substrate; that stretch reads NT. Residues Gly-267, Gly-296, and 317–318 contribute to the FMN site; that span reads YS.

This sequence belongs to the dihydroorotate dehydrogenase family. Type 2 subfamily. In terms of assembly, monomer. Requires FMN as cofactor.

It localises to the cell membrane. The catalysed reaction is (S)-dihydroorotate + a quinone = orotate + a quinol. It functions in the pathway pyrimidine metabolism; UMP biosynthesis via de novo pathway; orotate from (S)-dihydroorotate (quinone route): step 1/1. Catalyzes the conversion of dihydroorotate to orotate with quinone as electron acceptor. The protein is Dihydroorotate dehydrogenase (quinone) of Pseudomonas putida (strain GB-1).